The primary structure comprises 67 residues: Probable Sec-independent protein translocase protein TatE (67 aa).

The helical transmembrane segment at 4-21 (ISITKLLVVAALVVLLFG) threads the bilayer.

The protein belongs to the TatA/E family. TatE subfamily.

The protein localises to the cell inner membrane. In terms of biological role, part of the twin-arginine translocation (Tat) system that transports large folded proteins containing a characteristic twin-arginine motif in their signal peptide across membranes. TatE shares overlapping functions with TatA. The polypeptide is Probable Sec-independent protein translocase protein TatE (Shigella flexneri).